The sequence spans 243 residues: Protein S40-7 (243 aa).

2 disordered regions span residues 1 to 68 (MNKN…KSGL) and 107 to 143 (SSTASSSSSSGGGASAGSSSSARAIPTAPKPPQERLP). Positions 10–20 (SSPSSLATISD) are enriched in polar residues. A compositionally biased stretch (acidic residues) spans 22-32 (ADGELNEDDIF). Residues 47–67 (PVSSPAKQQTPARQLQRSKSG) show a composition bias toward polar residues.

It belongs to the senescence regulator S40 family.

The protein localises to the cytoplasm. In Arabidopsis thaliana (Mouse-ear cress), this protein is Protein S40-7.